A 499-amino-acid polypeptide reads, in one-letter code: Glutelin type-A 2 (499 aa).

Residues 1–24 form the signal peptide; that stretch reads MASINRPIVFFTVCLFLLCDGSLA. Disulfide bonds link cysteine 46/cysteine 79 and cysteine 122/cysteine 313. The Cupin type-1 1 domain occupies 51 to 248; the sequence is LQAFEPIRSV…AFGISNQVAR (198 aa). Residues 280-300 form a disordered region; the sequence is EQGQMQSREHYQEGGYQQSQY. The Cupin type-1 2 domain occupies 319–468; that stretch reads QNIDNPNRAD…AYRISREEAQ (150 aa).

It belongs to the 11S seed storage protein (globulins) family. Hexamer; each subunit is composed of an acidic and a basic chain derived from a single precursor and linked by a disulfide bond.

Its function is as follows. Seed storage protein. This Oryza sativa subsp. japonica (Rice) protein is Glutelin type-A 2 (GLUA2).